The chain runs to 118 residues: DNA-binding protein Msm_0708 (118 aa).

The interval glutamate 16–alanine 39 is disordered. Positions arginine 18–alanine 39 are enriched in low complexity.

Belongs to the PDCD5 family.

In Methanobrevibacter smithii (strain ATCC 35061 / DSM 861 / OCM 144 / PS), this protein is DNA-binding protein Msm_0708.